The primary structure comprises 372 residues: NAD(P)H-quinone oxidoreductase subunit 1 (372 aa).

8 helical membrane-spanning segments follow: residues tryptophan 29–valine 49, tryptophan 97–valine 117, valine 130–glycine 150, leucine 176–valine 196, isoleucine 204–leucine 224, phenylalanine 254–isoleucine 274, serine 308–methionine 328, and phenylalanine 347–proline 367.

Belongs to the complex I subunit 1 family. NDH-1 is composed of at least 11 different subunits.

The protein resides in the cellular thylakoid membrane. It carries out the reaction a plastoquinone + NADH + (n+1) H(+)(in) = a plastoquinol + NAD(+) + n H(+)(out). The catalysed reaction is a plastoquinone + NADPH + (n+1) H(+)(in) = a plastoquinol + NADP(+) + n H(+)(out). NDH-1 shuttles electrons from an unknown electron donor, via FMN and iron-sulfur (Fe-S) centers, to quinones in the respiratory and/or the photosynthetic chain. The immediate electron acceptor for the enzyme in this species is believed to be plastoquinone. Couples the redox reaction to proton translocation, and thus conserves the redox energy in a proton gradient. The polypeptide is NAD(P)H-quinone oxidoreductase subunit 1 (Crocosphaera subtropica (strain ATCC 51142 / BH68) (Cyanothece sp. (strain ATCC 51142))).